The chain runs to 416 residues: Phosphoglycerate kinase (416 aa).

Residues Val23, Asp24, Phe25, Asn26, Gln38, Arg39, Ser62, His63, Gly65, Arg66, Leu121, Arg122, His168, and Arg169 each contribute to the (2R)-3-phosphoglycerate site. Position 212 (Gly212) interacts with ADP. Gly212 contacts CDP. AMP-binding residues include Ala213 and Lys214. Ala213 is an ATP binding site. Ala213 contacts Mg(2+). 2 residues coordinate Mg(2+): Ala216 and Asp217. Residue Asp217 coordinates CDP. An AMP-binding site is contributed by Lys218. Lys218 provides a ligand contact to ATP. Gly236 is an ADP binding site. Gly236 is a CDP binding site. Positions 237 and 311 each coordinate AMP. ATP is bound by residues Gly237 and Gly311. 2 residues coordinate CDP: Gly336 and Phe341. Residue Phe341 coordinates ADP. Glu342 provides a ligand contact to AMP. The ATP site is built by Glu342, Asp373, and Thr374. Mg(2+) is bound at residue Asp373.

Belongs to the phosphoglycerate kinase family. Monomer. It depends on Mg(2+) as a cofactor.

It localises to the cytoplasm. Its subcellular location is the mitochondrion. It carries out the reaction (2R)-3-phosphoglycerate + ATP = (2R)-3-phospho-glyceroyl phosphate + ADP. The protein operates within carbohydrate degradation; glycolysis; pyruvate from D-glyceraldehyde 3-phosphate: step 2/5. Its function is as follows. Catalyzes one of the two ATP producing reactions in the glycolytic pathway via the reversible conversion of 1,3-diphosphoglycerate to 3-phosphoglycerate. Both L- and D- forms of purine and pyrimidine nucleotides can be used as substrates, but the activity is much lower on pyrimidines. Negatively regulates the biosynthesis of acetyl-CoA from pyruvate in the mitochondrion. The protein is Phosphoglycerate kinase (PGK) of Kluyveromyces lactis (strain ATCC 8585 / CBS 2359 / DSM 70799 / NBRC 1267 / NRRL Y-1140 / WM37) (Yeast).